Consider the following 81-residue polypeptide: Large ribosomal subunit protein bL31B (81 aa).

This sequence belongs to the bacterial ribosomal protein bL31 family. Type B subfamily. As to quaternary structure, part of the 50S ribosomal subunit.

This chain is Large ribosomal subunit protein bL31B, found in Limosilactobacillus reuteri (strain DSM 20016) (Lactobacillus reuteri).